The chain runs to 212 residues: Methylthioribulose-1-phosphate dehydratase (212 aa).

H103 and H105 together coordinate Zn(2+).

Belongs to the aldolase class II family. MtnB subfamily. The cofactor is Zn(2+).

It catalyses the reaction 5-(methylsulfanyl)-D-ribulose 1-phosphate = 5-methylsulfanyl-2,3-dioxopentyl phosphate + H2O. Its pathway is amino-acid biosynthesis; L-methionine biosynthesis via salvage pathway; L-methionine from S-methyl-5-thio-alpha-D-ribose 1-phosphate: step 2/6. Catalyzes the dehydration of methylthioribulose-1-phosphate (MTRu-1-P) into 2,3-diketo-5-methylthiopentyl-1-phosphate (DK-MTP-1-P). This chain is Methylthioribulose-1-phosphate dehydratase, found in Sorangium cellulosum (strain So ce56) (Polyangium cellulosum (strain So ce56)).